Reading from the N-terminus, the 982-residue chain is Glutamate [NMDA] receptor subunit 1 (982 aa).

Residues 1-16 (MAFAVWFLSTFVIVAA) form the signal peptide. Residues 17–561 (QRHMALEHEG…TLVSFLQPFS (545 aa)) lie on the Extracellular side of the membrane. Residues Asn-247, Asn-303, Asn-334, Asn-386, Asn-443, Asn-470, and Asn-490 are each glycosylated (N-linked (GlcNAc...) asparagine). Residues 518-520 (PLT) and Arg-525 contribute to the glycine site. The helical transmembrane segment at 562–582 (NTLWILVMVSVHVVALVLYLL) threads the bilayer. Residues 583 to 639 (DRFSPFGRFKLSHSDSNEEKALNLSSAVWFAWGVLLNSGIGEGTPRSFSARVLGMVW) are Cytoplasmic-facing. A helical transmembrane segment spans residues 640–660 (AGFAMIIVASYTANLAAFLVL). Residues 661–819 (ERPKTKLSGI…KTPNTLGLKN (159 aa)) are Extracellular-facing. Asn-681 carries N-linked (GlcNAc...) asparagine glycosylation. Glycine is bound by residues Ser-691 and Asp-735. Residues 820 to 840 (MAGVFILVGVGIAGGVGLIII) form a helical membrane-spanning segment. Residues 841 to 982 (EVIYKKHQVK…YTSDVSHLVV (142 aa)) lie on the Cytoplasmic side of the membrane. The tract at residues 934–982 (EIGKPGQSPKVIGGPPHPMLGKTRPQAQQNLLPPRYSPGYTSDVSHLVV) is disordered. The segment covering 972–982 (GYTSDVSHLVV) has biased composition (polar residues).

This sequence belongs to the glutamate-gated ion channel (TC 1.A.10.1) family. In terms of assembly, forms a heteromeric NMDA channel with Nmdar2.

Its subcellular location is the cell membrane. The protein localises to the postsynaptic cell membrane. The protein resides in the postsynaptic density. NMDA receptor subtype of glutamate-gated ion channels with high calcium permeability and voltage-dependent sensitivity to magnesium. Mediated by glycine. This protein plays a key role in synaptic plasticity, synaptogenesis, excitotoxicity, memory acquisition and learning. It mediates neuronal functions in glutamate neurotransmission. Is involved in the cell surface targeting of NMDA receptors. Plays a role in associative learning and in long-term memory consolidation. The polypeptide is Glutamate [NMDA] receptor subunit 1 (Drosophila willistoni (Fruit fly)).